The sequence spans 144 residues: Glycine-rich protein DC9.1 (144 aa).

The chain crosses the membrane as a helical span at residues 5 to 25; it reads IFLLLGLSIAFAILISSEVAA. Repeat copies occupy residues 37 to 42, 43 to 48, 50 to 55, 56 to 61, 63 to 68, 69 to 74, 76 to 81, 82 to 87, 89 to 94, 102 to 107, and 108 to 113. An 11 X 6 AA tandem repeats of G-Y-[NH]-N-G -G region spans residues 37–113; sequence GYNNGGGYHN…NNGGGHHGGG (77 aa).

The protein belongs to the GRP family.

Its subcellular location is the membrane. The protein is Glycine-rich protein DC9.1 of Daucus carota (Wild carrot).